Here is a 732-residue protein sequence, read N- to C-terminus: uncharacterized protein (732 aa).

A disordered region spans residues 145–207 (ETLRDSVINP…RRRPEMASPH (63 aa)). Residues 170–179 (KGHETLERGS) are compositionally biased toward basic and acidic residues. A Reverse transcriptase domain is found at 176 to 524 (ERGSKALGPE…KKIPFLGYLI (349 aa)).

It is found in the mitochondrion. This is an uncharacterized protein from Marchantia polymorpha (Common liverwort).